Reading from the N-terminus, the 602-residue chain is MTDAPLSRIRNFCIIAHIDHGKSTLADRLLQDTGTVAARDMQEQFLDNMELERERGITIKLQAARMEHIANDGEAYILNLIDTPGHVDFSYEVSRSLQACEGALLVVDASQGVEAQTLANVYLALEQNLEIIPVLNKIDLPGADPERVRQEIEAIIGLDTSKAITCSAKTGIGISEILQAIVERIPPPVDAIEEPLKALIFDSYYDPYRGVIVYFRVMSGQIKTRDKILLMASKKNYELDEVGIMIPGERKVDSLHAGEVGYLAASIKSVADARVGDTITLANNPANNALPGYTEVKPVVFCGLFPTDADQYPDLREALARLQLSDAALKYEPETSSAMGFGFRCGFLGLLHMEIVQERLEREYDLDLIVTAPSVVYKVNMIDESTVMVDNPATLPGPQKRKSIEEPYVKLEIYTPNSYNGTLMELCQERRGEFIDMKYLTTDRVTLHYELPLAEVVTDFFDQMKSRTKGYASMEYNLIGYRPNDLVCLDILINNEKADPLTTIVHRDKAYNVAKGLVEKLKELIPRQQFKIPLQASIGSRVIASESISAIRKDVLAKCYGGDISRKKKLLQKQAKGKKRMKAMGKVDVPQEAFMAVLTLNK.

The tr-type G domain occupies 7-189 (SRIRNFCIIA…AIVERIPPPV (183 aa)). GTP is bound by residues 16 to 23 (AHIDHGKS), 82 to 86 (DTPGH), and 136 to 139 (NKID).

It belongs to the TRAFAC class translation factor GTPase superfamily. Classic translation factor GTPase family. LepA subfamily.

It is found in the plastid. Its subcellular location is the organellar chromatophore. It carries out the reaction GTP + H2O = GDP + phosphate + H(+). Promotes protein synthesis. May act as a fidelity factor of the translation reaction, by catalyzing a one-codon backward translocation of tRNAs on improperly translocated ribosomes. The protein is Translation factor GUF1 homolog, organellar chromatophore of Paulinella chromatophora.